The following is a 392-amino-acid chain: F-box/kelch-repeat protein At4g39550 (392 aa).

Residues 1–12 show a composition bias toward basic residues; the sequence is MSSPEKKRKTTK. The interval 1–27 is disordered; it reads MSSPEKKRKTTKKPSPTPQSTTPNPSL. Low complexity predominate over residues 18–27; sequence PQSTTPNPSL. One can recognise an F-box domain in the interval 21-67; the sequence is TTPNPSLPDDLVVSCLARVSRLYYPTLSLVSKSFRSLIASPDLYKTR. Kelch repeat units lie at residues 148–194, 195–242, and 244–285; these read NIYN…VVEG, KIYV…KSAV, and EGEI…VVEN.

In terms of assembly, part of a SCF (ASK-cullin-F-box) protein ligase complex. Interacts with ASK13 and ASK14.

The protein operates within protein modification; protein ubiquitination. Component of SCF(ASK-cullin-F-box) E3 ubiquitin ligase complexes, which may mediate the ubiquitination and subsequent proteasomal degradation of target proteins. The chain is F-box/kelch-repeat protein At4g39550 from Arabidopsis thaliana (Mouse-ear cress).